The sequence spans 718 residues: Phospholipid phosphatase-related protein type 3 (718 aa).

The next 3 helical transmembrane spans lie at 18-38 (LPCFYFVELPIVASSIVSLYF), 70-90 (LIPLLMLLSLAFAAPAASIMV), and 133-153 (FVGVHVFGLCATALVTDVIQL). A glycan (N-linked (GlcNAc...) asparagine) is linked at Asn169. 3 consecutive transmembrane segments (helical) span residues 207-227 (HATLSAFAAVYVSMYFNSVIS), 233-253 (LKPILVFAFAIAAGVCGLTQI), and 263-283 (VYAGFLIGAGIAAYLACHAVG). Residues 313–347 (SVYQQNKSVSTDELGPPGRLEGAPRPVAREKTSLG) are disordered. The span at 314–323 (VYQQNKSVST) shows a compositional bias: polar residues. Asn318 is a glycosylation site (N-linked (GlcNAc...) asparagine). A phosphoserine mark is found at Ser322 and Ser353. Position 376 is a phosphothreonine (Thr376). The tract at residues 416-488 (LEGRGLGLPD…GPRVILPPRA (73 aa)) is disordered. Ser428 carries the post-translational modification Phosphoserine. The segment covering 439–462 (MAEEEEEEEDEEEEEEEEEEEDEG) has biased composition (acidic residues). Ser508 is subject to Phosphoserine. A compositionally biased stretch (low complexity) spans 545 to 571 (APGAPGPKAAETASSSSASSDSSQYRS). A disordered region spans residues 545-577 (APGAPGPKAAETASSSSASSDSSQYRSPSDRDS). The residue at position 641 (Ser641) is a Phosphoserine. Low complexity predominate over residues 664-680 (GEGLPPLGAADGALGPG). The tract at residues 664 to 702 (GEGLPPLGAADGALGPGSRESTLRRHAGGLGLAEREAEA) is disordered.

Belongs to the PA-phosphatase related phosphoesterase family.

The protein localises to the membrane. The polypeptide is Phospholipid phosphatase-related protein type 3 (Homo sapiens (Human)).